A 175-amino-acid chain; its full sequence is Shikimate kinase (175 aa).

Position 17–22 (17–22 (GAGKST)) interacts with ATP. Position 21 (Ser-21) interacts with Mg(2+). Asp-39, Arg-63, and Gly-85 together coordinate substrate. Arg-123 contributes to the ATP binding site. Arg-142 contacts substrate. Gln-159 contacts ATP.

The protein belongs to the shikimate kinase family. As to quaternary structure, monomer. Mg(2+) serves as cofactor.

The protein localises to the cytoplasm. It carries out the reaction shikimate + ATP = 3-phosphoshikimate + ADP + H(+). It functions in the pathway metabolic intermediate biosynthesis; chorismate biosynthesis; chorismate from D-erythrose 4-phosphate and phosphoenolpyruvate: step 5/7. Catalyzes the specific phosphorylation of the 3-hydroxyl group of shikimic acid using ATP as a cosubstrate. This is Shikimate kinase from Photobacterium profundum (strain SS9).